The chain runs to 198 residues: 7-methyl-GTP pyrophosphatase (198 aa).

D72 functions as the Proton acceptor in the catalytic mechanism.

It belongs to the Maf family. YceF subfamily. Requires a divalent metal cation as cofactor.

The protein resides in the cytoplasm. The enzyme catalyses N(7)-methyl-GTP + H2O = N(7)-methyl-GMP + diphosphate + H(+). Its function is as follows. Nucleoside triphosphate pyrophosphatase that hydrolyzes 7-methyl-GTP (m(7)GTP). May have a dual role in cell division arrest and in preventing the incorporation of modified nucleotides into cellular nucleic acids. The polypeptide is 7-methyl-GTP pyrophosphatase (Idiomarina loihiensis (strain ATCC BAA-735 / DSM 15497 / L2-TR)).